Here is a 43-residue protein sequence, read N- to C-terminus: Protein PsbN (43 aa).

A helical transmembrane segment spans residues 5-27; sequence TLVAIFISGSLVSFTGYALYTAF.

The protein belongs to the PsbN family.

It is found in the plastid. The protein resides in the chloroplast thylakoid membrane. Functionally, may play a role in photosystem I and II biogenesis. The polypeptide is Protein PsbN (Nelumbo lutea (American lotus)).